Reading from the N-terminus, the 69-residue chain is UPF0435 protein SH1076 (69 aa).

This sequence belongs to the UPF0435 family.

The protein is UPF0435 protein SH1076 of Staphylococcus haemolyticus (strain JCSC1435).